Consider the following 263-residue polypeptide: GTP cyclohydrolase 1 type 2 homolog (263 aa).

A divalent metal cation contacts are provided by His65, His66, Asp104, His225, and Glu229.

It belongs to the GTP cyclohydrolase I type 2/NIF3 family. As to quaternary structure, homohexamer.

The sequence is that of GTP cyclohydrolase 1 type 2 homolog from Nostoc sp. (strain PCC 7120 / SAG 25.82 / UTEX 2576).